Consider the following 283-residue polypeptide: Elongation factor Ts (283 aa).

Residues 80-83 (TDFV) form an involved in Mg(2+) ion dislocation from EF-Tu region.

Belongs to the EF-Ts family.

It localises to the cytoplasm. In terms of biological role, associates with the EF-Tu.GDP complex and induces the exchange of GDP to GTP. It remains bound to the aminoacyl-tRNA.EF-Tu.GTP complex up to the GTP hydrolysis stage on the ribosome. This is Elongation factor Ts from Salmonella gallinarum (strain 287/91 / NCTC 13346).